An 867-amino-acid chain; its full sequence is Bifunctional isopimaradiene synthase, chloroplastic (867 aa).

A chloroplast-targeting transit peptide spans 1 to 68; the sequence is MALLSSSLSS…VGEGTTSLPY (68 aa). Residue K267 participates in substrate binding. Residues D400 and D402 each coordinate Mg(2+). The DXDD motif signature appears at 400–403; the sequence is DIDD. K487 is a substrate binding site. Mg(2+) contacts are provided by D619, D623, N763, T767, and E771. The DDXXD motif signature appears at 619-623; the sequence is DDLYD.

Belongs to the terpene synthase family. Tpsd subfamily. Requires Mg(2+) as cofactor.

It localises to the plastid. It is found in the chloroplast. It carries out the reaction (2E,6E,10E)-geranylgeranyl diphosphate = (+)-copalyl diphosphate. The catalysed reaction is (+)-copalyl diphosphate = isopimara-7,15-diene + diphosphate. Its pathway is terpene metabolism; oleoresin biosynthesis. Its function is as follows. Involved in defensive oleoresin formation in conifers in response to insect attack or other injury. Involved in diterpene (C20) olefins biosynthesis. Bifunctional enzyme that catalyzes two sequential cyclizations of geranylgeranyl diphosphate (GGPP) to isopimara-7,15-diene. The protein is Bifunctional isopimaradiene synthase, chloroplastic (TPS-ISO) of Picea abies (Norway spruce).